The sequence spans 168 residues: MKKSDPAPGGEEKVDRIVRQVWDLTEPVIRAEGMEIIEIEYRRESPGWVLRVFVDQEGGVSVDDCARISRVVGDLLDVADIIHYPYHLEVSSPGLNRPLRKREQFAKVVGKVIEVKTLVPFGTRRNFKGILKEVGVERIRMDCDNQLFEIPFSNMDRARLRYFDSQED.

The protein belongs to the RimP family.

The protein resides in the cytoplasm. Required for maturation of 30S ribosomal subunits. The sequence is that of Ribosome maturation factor RimP from Syntrophobacter fumaroxidans (strain DSM 10017 / MPOB).